Consider the following 431-residue polypeptide: UDP-N-acetylglucosamine 1-carboxyvinyltransferase (431 aa).

Lysine 22–asparagine 23 lines the phosphoenolpyruvate pocket. Residue arginine 92 coordinates UDP-N-acetyl-alpha-D-glucosamine. Residue aspartate 116 is the Proton donor of the active site. Residues arginine 121–glutamine 125, aspartate 307, and isoleucine 330 each bind UDP-N-acetyl-alpha-D-glucosamine.

The protein belongs to the EPSP synthase family. MurA subfamily.

It localises to the cytoplasm. The catalysed reaction is phosphoenolpyruvate + UDP-N-acetyl-alpha-D-glucosamine = UDP-N-acetyl-3-O-(1-carboxyvinyl)-alpha-D-glucosamine + phosphate. It participates in cell wall biogenesis; peptidoglycan biosynthesis. Cell wall formation. Adds enolpyruvyl to UDP-N-acetylglucosamine. This is UDP-N-acetylglucosamine 1-carboxyvinyltransferase from Lactobacillus acidophilus (strain ATCC 700396 / NCK56 / N2 / NCFM).